A 124-amino-acid polypeptide reads, in one-letter code: Protein TraJ (124 aa).

It localises to the cytoplasm. Functionally, this protein is essential for positively regulating the expression of transfer genes that are involved in the conjugal transfer of DNA between bacterial cells. This chain is Protein TraJ (traJ), found in Escherichia coli.